A 316-amino-acid chain; its full sequence is uncharacterized protein (316 aa).

Positions 285–316 are disordered; the sequence is APEGDLGDIIEVDPSEPRSDPYRRLRTPPPGG. Positions 289–298 are enriched in acidic residues; sequence DLGDIIEVDP.

Functionally, possibly necessary for replication. This is an uncharacterized protein from Halobacterium salinarum (Halobacterium halobium).